The chain runs to 382 residues: Queuine tRNA-ribosyltransferase (382 aa).

Aspartate 96 serves as the catalytic Proton acceptor. Residues aspartate 96–phenylalanine 100, aspartate 151, glutamine 194, and glycine 221 contribute to the substrate site. The segment at glycine 252–serine 258 is RNA binding. Aspartate 271 functions as the Nucleophile in the catalytic mechanism. The segment at threonine 276–arginine 280 is RNA binding; important for wobble base 34 recognition. 4 residues coordinate Zn(2+): cysteine 309, cysteine 311, cysteine 314, and histidine 340.

It belongs to the queuine tRNA-ribosyltransferase family. Homodimer. Within each dimer, one monomer is responsible for RNA recognition and catalysis, while the other monomer binds to the replacement base PreQ1. Zn(2+) is required as a cofactor.

It carries out the reaction 7-aminomethyl-7-carbaguanine + guanosine(34) in tRNA = 7-aminomethyl-7-carbaguanosine(34) in tRNA + guanine. It participates in tRNA modification; tRNA-queuosine biosynthesis. Catalyzes the base-exchange of a guanine (G) residue with the queuine precursor 7-aminomethyl-7-deazaguanine (PreQ1) at position 34 (anticodon wobble position) in tRNAs with GU(N) anticodons (tRNA-Asp, -Asn, -His and -Tyr). Catalysis occurs through a double-displacement mechanism. The nucleophile active site attacks the C1' of nucleotide 34 to detach the guanine base from the RNA, forming a covalent enzyme-RNA intermediate. The proton acceptor active site deprotonates the incoming PreQ1, allowing a nucleophilic attack on the C1' of the ribose to form the product. After dissociation, two additional enzymatic reactions on the tRNA convert PreQ1 to queuine (Q), resulting in the hypermodified nucleoside queuosine (7-(((4,5-cis-dihydroxy-2-cyclopenten-1-yl)amino)methyl)-7-deazaguanosine). The polypeptide is Queuine tRNA-ribosyltransferase (Lactococcus lactis subsp. cremoris (strain SK11)).